A 213-amino-acid chain; its full sequence is Octanoyltransferase (213 aa).

One can recognise a BPL/LPL catalytic domain in the interval 35 to 213 (DKHGDAVLLL…ERHLPTLVGA (179 aa)). Residues 73-80 (RGGKITWH), 145-147 (AIG), and 158-160 (GFS) contribute to the substrate site. C176 (acyl-thioester intermediate) is an active-site residue.

This sequence belongs to the LipB family.

It is found in the cytoplasm. The catalysed reaction is octanoyl-[ACP] + L-lysyl-[protein] = N(6)-octanoyl-L-lysyl-[protein] + holo-[ACP] + H(+). Its pathway is protein modification; protein lipoylation via endogenous pathway; protein N(6)-(lipoyl)lysine from octanoyl-[acyl-carrier-protein]: step 1/2. Functionally, catalyzes the transfer of endogenously produced octanoic acid from octanoyl-acyl-carrier-protein onto the lipoyl domains of lipoate-dependent enzymes. Lipoyl-ACP can also act as a substrate although octanoyl-ACP is likely to be the physiological substrate. The sequence is that of Octanoyltransferase from Salinispora arenicola (strain CNS-205).